A 258-amino-acid polypeptide reads, in one-letter code: Small ribosomal subunit protein mS40 (258 aa).

The transit peptide at 1-35 directs the protein to the mitochondrion; the sequence is MAASVLNTVLRRLPMLSLFRGSHRVQVPLQTLCTK. A phosphoserine mark is found at serine 38 and serine 49. Residues 214–258 are disordered; the sequence is SRLRRLYQGHLQEESGPPPESMPKMPPRTPAEASSTGQTGPQSAL. Residues 229–242 show a composition bias toward pro residues; the sequence is GPPPESMPKMPPRT. A compositionally biased stretch (polar residues) spans 245-258; that stretch reads EASSTGQTGPQSAL.

The protein belongs to the bacterial ribosomal protein bS18 family. Mitochondrion-specific ribosomal protein mS40 subfamily. In terms of assembly, component of the mitochondrial small ribosomal subunit (mt-SSU). Mature mammalian 55S mitochondrial ribosomes consist of a small (28S) and a large (39S) subunit. The 28S small subunit contains a 12S ribosomal RNA (12S mt-rRNA) and 30 different proteins. The 39S large subunit contains a 16S rRNA (16S mt-rRNA), a copy of mitochondrial valine transfer RNA (mt-tRNA(Val)), which plays an integral structural role, and 52 different proteins. mS40 has a zinc binding site.

The protein localises to the mitochondrion. This chain is Small ribosomal subunit protein mS40 (MRPS18B), found in Homo sapiens (Human).